The primary structure comprises 234 residues: dTDP-4-amino-4,6-dideoxyglucose formyltransferase (234 aa).

DTDP-4-amino-4,6-dideoxy-alpha-D-glucose is bound by residues N9 and 62 to 64 (HCK). Residue 65–67 (QRF) coordinates (6R)-10-formyltetrahydrofolate. H81 acts as the Proton acceptor in catalysis. 90–94 (GWFPQ) contributes to the dTDP-4-amino-4,6-dideoxy-alpha-D-glucose binding site. Positions 112, 116, and 175 each coordinate (6R)-10-formyltetrahydrofolate. Residue N209 coordinates dTDP-4-amino-4,6-dideoxy-alpha-D-glucose.

The protein belongs to the dTDP-Qui4N formyltransferase family. As to quaternary structure, homodimer.

It carries out the reaction dTDP-4-amino-4,6-dideoxy-alpha-D-glucose + (6R)-10-formyltetrahydrofolate = dTDP-4-formamido-4,6-dideoxy-alpha-D-glucose + (6S)-5,6,7,8-tetrahydrofolate + H(+). Its function is as follows. Sugar N-formyltransferase that catalyzes the conversion of dTDP-4-amino-4,6-dideoxyglucose into dTDP-4-formamido-4,6-dideoxyglucose using N(10)-formyltetrahydrofolate as the carbon source. Plays a role in virulence. The protein is dTDP-4-amino-4,6-dideoxyglucose formyltransferase of Mycobacterium bovis (strain ATCC BAA-935 / AF2122/97).